The primary structure comprises 418 residues: Calreticulin (418 aa).

A signal peptide spans 1–17 (MLLPVPLLLGLLGLAAA). The N-domain stretch occupies residues 18 to 197 (EPVVYFKEQF…NSQVESGSLE (180 aa)). Gln26 contributes to the Ca(2+) binding site. N6-acetyllysine is present on Lys48. Ca(2+) is bound by residues Lys62 and Lys64. Lys64 carries the post-translational modification N6-(2-hydroxyisobutyryl)lysine. Cys105 and Cys137 are disulfide-bonded. An alpha-D-glucoside contacts are provided by Tyr109, Lys111, Tyr128, and Asp135. Lys159 is subject to N6-acetyllysine. The 1-1 repeat unit spans residues 191–202 (VESGSLEDDWDF). The tract at residues 191-255 (VESGSLEDDW…DAKKPEDWDE (65 aa)) is 4 X approximate repeats. The segment at 193–277 (SGSLEDDWDF…NPEYKGEWKP (85 aa)) is disordered. Residues 198 to 308 (DDWDFLPPKK…YSPDANIYAY (111 aa)) are P-domain. The span at 207–251 (KIKDPDASKPEDWDERAKIDDPTDSKPEDWDKPEHIPDPDAKKPE) shows a compositional bias: basic and acidic residues. Residue Lys209 is modified to N6-acetyllysine. 6 repeat units span residues 210–221 (DPDASKPEDWDE), 227–238 (DPTDSKPEDWDK), 244–255 (DPDAKKPEDWDE), 259–269 (GEWEPPVIQNP), 273–283 (GEWKPRQIDNP), and 287–297 (GTWIHPEIDNP). Residues 237 to 270 (DKPEHIPDPDAKKPEDWDEEMDGEWEPPVIQNPE) form an interaction with PPIB region. Positions 252–261 (DWDEEMDGEW) are enriched in acidic residues. The tract at residues 259–297 (GEWEPPVIQNPEYKGEWKPRQIDNPDYKGTWIHPEIDNP) is 3 X approximate repeats. Positions 309 to 418 (DSFAVLGLDL…AAAGQAKDEL (110 aa)) are C-domain. Asp317 serves as a coordination point for an alpha-D-glucoside. Ca(2+) is bound at residue Asp328. The interval 349 to 418 (VTKTAEKQMK…AAAGQAKDEL (70 aa)) is disordered. Over residues 352 to 379 (TAEKQMKDKQDEEQRLKEEEEEKKRKEE) the composition is skewed to basic and acidic residues. Acidic residues predominate over residues 380 to 409 (EEAEEDEEDKDDKEDEDEDEEDKDEEEEEA). A Prevents secretion from ER motif is present at residues 415-418 (KDEL).

The protein belongs to the calreticulin family. As to quaternary structure, monomer. Component of an EIF2 complex at least composed of CELF1/CUGBP1, CALR, CALR3, EIF2S1, EIF2S2, HSP90B1 and HSPA5. Interacts with PDIA3/ERp57 and SPACA9. Interacts with TRIM21. Interacts with NR3C1. Interacts with PPIB. Interacts (via P-domain) with PDIA5. Interacts with CLCC1.

It is found in the endoplasmic reticulum lumen. The protein localises to the cytoplasm. Its subcellular location is the cytosol. It localises to the secreted. The protein resides in the extracellular space. It is found in the extracellular matrix. The protein localises to the cell surface. Its subcellular location is the sarcoplasmic reticulum lumen. It localises to the cytoplasmic vesicle. The protein resides in the secretory vesicle. It is found in the cortical granule. The protein localises to the cytolytic granule. In terms of biological role, calcium-binding chaperone that promotes folding, oligomeric assembly and quality control in the endoplasmic reticulum (ER) via the calreticulin/calnexin cycle. This lectin interacts transiently with almost all of the monoglucosylated glycoproteins that are synthesized in the ER. Interacts with the DNA-binding domain of NR3C1 and mediates its nuclear export. Involved in maternal gene expression regulation. May participate in oocyte maturation via the regulation of calcium homeostasis. Present in the cortical granules of non-activated oocytes, is exocytosed during the cortical reaction in response to oocyte activation and might participate in the block to polyspermy. The sequence is that of Calreticulin (CALR) from Oryctolagus cuniculus (Rabbit).